Consider the following 283-residue polypeptide: 2-dehydro-3-deoxyphosphooctonate aldolase (283 aa).

Belongs to the KdsA family.

The protein resides in the cytoplasm. The enzyme catalyses D-arabinose 5-phosphate + phosphoenolpyruvate + H2O = 3-deoxy-alpha-D-manno-2-octulosonate-8-phosphate + phosphate. Its pathway is carbohydrate biosynthesis; 3-deoxy-D-manno-octulosonate biosynthesis; 3-deoxy-D-manno-octulosonate from D-ribulose 5-phosphate: step 2/3. It functions in the pathway bacterial outer membrane biogenesis; lipopolysaccharide biosynthesis. The polypeptide is 2-dehydro-3-deoxyphosphooctonate aldolase (Laribacter hongkongensis (strain HLHK9)).